We begin with the raw amino-acid sequence, 27 residues long: Pregnancy-associated glycoprotein 62 (27 aa).

This sequence belongs to the peptidase A1 family. In terms of processing, glycosylated. As to expression, placenta.

The sequence is that of Pregnancy-associated glycoprotein 62 (PAG62) from Capra hircus (Goat).